Here is a 319-residue protein sequence, read N- to C-terminus: Myoblast determination protein 1 (319 aa).

Met1 is covalently cross-linked (Peptide (Met-Gly) (interchain with G-Cter in ubiquitin)). Lys104 is subject to N6-methyllysine; by EHMT2. In terms of domain architecture, bHLH spans 109–160; it reads DRRKAATMRERRRLSKVNEAFETLKRCTSSNPNQRLPKVEILRNAIRYIEGL. Disordered stretches follow at residues 174 to 222 and 267 to 319; these read AAAA…GARR and PALL…YQVL. Polar residues predominate over residues 197-207; it reads SDASSPRSNCS. Over residues 267–276 the composition is skewed to low complexity; the sequence is PALLLADAPP.

As to quaternary structure, efficient DNA binding requires dimerization with another bHLH protein. Seems to form active heterodimers with ITF-2. Interacts with SUV39H1. Interacts with DDX5. Interacts with CHD2. Interacts with TSC22D3. Interacts with SETD3. Interacts with P-TEFB complex; promotes the transcriptional activity of MYOD1 through its CDK9-mediated phosphorylation. Interacts with CSRP3. Interacts with NUPR1. Phosphorylated by CDK9. This phosphorylation promotes its function in muscle differentiation. In terms of processing, acetylated by a complex containing EP300 and PCAF. The acetylation is essential to activate target genes. Conversely, its deacetylation by SIRT1 inhibits its function. Post-translationally, ubiquitinated on the N-terminus; which is required for proteasomal degradation. Methylation at Lys-104 by EHMT2/G9a inhibits myogenic activity.

It localises to the nucleus. Acts as a transcriptional activator that promotes transcription of muscle-specific target genes and plays a role in muscle differentiation. Together with MYF5 and MYOG, co-occupies muscle-specific gene promoter core region during myogenesis. Induces fibroblasts to differentiate into myoblasts. Interacts with and is inhibited by the twist protein. This interaction probably involves the basic domains of both proteins. This chain is Myoblast determination protein 1 (MYOD1), found in Ovis aries (Sheep).